The following is a 214-amino-acid chain: uncharacterized protein (214 aa).

2 helical membrane-spanning segments follow: residues 23–43 (ILVG…VAAA) and 65–85 (VLYA…PVLL). The disordered stretch occupies residues 96–115 (ATRPTGASVRGGRSIGSGHP). Helical transmembrane passes span 152–172 (VVLT…TYLM) and 181–201 (WISY…EWLY).

The protein resides in the cell membrane. This is an uncharacterized protein from Mycobacterium tuberculosis (strain CDC 1551 / Oshkosh).